The following is a 260-amino-acid chain: Snake venom serine protease KN5 (260 aa).

An N-terminal signal peptide occupies residues 1–18 (MVLIRVLANLLILQLSYA). The propeptide occupies 19-24 (QKSSEL). The Peptidase S1 domain maps to 25–251 (VIGGDECNIN…HLDWIQSIIA (227 aa)). 5 cysteine pairs are disulfide-bonded: cysteine 31/cysteine 165, cysteine 100/cysteine 258, cysteine 144/cysteine 212, cysteine 176/cysteine 191, and cysteine 202/cysteine 227. The Charge relay system role is filled by histidine 67. Asparagine 105 carries an N-linked (GlcNAc...) asparagine glycan. Aspartate 112 serves as the catalytic Charge relay system. N-linked (GlcNAc...) asparagine glycosylation is found at asparagine 124 and asparagine 172. Serine 206 functions as the Charge relay system in the catalytic mechanism. N-linked (GlcNAc...) asparagine glycosylation is found at asparagine 213 and asparagine 255.

This sequence belongs to the peptidase S1 family. Snake venom subfamily. As to quaternary structure, monomer. In terms of tissue distribution, expressed by the venom gland.

The protein localises to the secreted. Snake venom serine protease that may act in the hemostasis system of the prey. The protein is Snake venom serine protease KN5 of Trimeresurus stejnegeri (Chinese green tree viper).